The sequence spans 109 residues: uncharacterized protein (109 aa).

Positions 1 to 25 are cleaved as a signal peptide; that stretch reads MKGIFLVVQLGFSIMVFLFLAAVNW. The chain crosses the membrane as a helical span at residues 73–95; that stretch reads YPVMSALMIISFLYVLAALFLLI.

The protein localises to the membrane. This is an uncharacterized protein from Bacillus subtilis (strain 168).